The sequence spans 98 residues: Co-chaperonin GroES (98 aa).

Belongs to the GroES chaperonin family. Heptamer of 7 subunits arranged in a ring. Interacts with the chaperonin GroEL.

It is found in the cytoplasm. Its function is as follows. Together with the chaperonin GroEL, plays an essential role in assisting protein folding. The GroEL-GroES system forms a nano-cage that allows encapsulation of the non-native substrate proteins and provides a physical environment optimized to promote and accelerate protein folding. GroES binds to the apical surface of the GroEL ring, thereby capping the opening of the GroEL channel. The sequence is that of Co-chaperonin GroES from Leifsonia xyli subsp. xyli (strain CTCB07).